The following is a 555-amino-acid chain: Neurofilament light polypeptide (555 aa).

At serine 2 the chain carries N-acetylserine. Residues 2-93 are head; the sequence is SSFSYEPYYS…KSIRTQEKAQ (92 aa). The residue at position 23 (arginine 23) is an Asymmetric dimethylarginine; alternate. Arginine 23 bears the Omega-N-methylarginine; alternate mark. Omega-N-methylarginine is present on arginine 30. Position 43 is a phosphotyrosine (tyrosine 43). Serine 56, serine 67, and serine 103 each carry phosphoserine. Residues 90–401 enclose the IF rod domain; sequence EKAQLQDLND…KLLEGEETRL (312 aa). Residues 94–125 are coil 1A; sequence LQDLNDRFASFIERVHELEQQNKVLEAELLVL. Positions 126 to 138 are linker 1; sequence RQKHSEPSRFRAL. The tract at residues 139–234 is coil 1B; it reads YEQEIRDLRL…KVHEEEIAEL (96 aa). Residues 235–253 are linker 12; that stretch reads QAQIQYAQISVEMDVSSKP. Positions 254 to 272 are coil 2A; sequence DLSAALKDIRAQYEKLAAK. The interval 273–281 is linker 2; it reads NMQNAEEWF. Residues 282 to 397 form a coil 2B region; that stretch reads KSRFTVLTES…AAYRKLLEGE (116 aa). The segment at 398–444 is tail, subdomain A; it reads ETRLSFTSVGSLTTGYTQSSQVFGRSAYGGLQTSSYLMSARSFPSYY. Residues 398 to 555 are tail; the sequence is ETRLSFTSVG…GEEQATKKKD (158 aa). Positions 445–555 are tail, subdomain B (acidic); it reads TSHVQEEQIE…GEEQATKKKD (111 aa). The tract at residues 463 to 555 is disordered; it reads KAEEAKDEPP…GEEQATKKKD (93 aa). The segment covering 472 to 540 has biased composition (acidic residues); it reads PSEGEAEEEE…ETKEAEEEEK (69 aa). Serine 473 carries the post-translational modification Phosphoserine. Threonine 532 is modified (phosphothreonine). Over residues 541–555 the composition is skewed to basic and acidic residues; sequence KDEGAGEEQATKKKD.

It belongs to the intermediate filament family. Forms homodimers (in vitro). Forms heterodimers with NEFH or NEFM; which can further hetero-oligomerize (in vitro). Forms heterodimers with INA (in vitro). Interacts with ARHGEF28. Interacts with TRIM2. O-glycosylated. Post-translationally, phosphorylated in the head and rod regions by the PKC kinase PKN1, leading to the inhibition of polymerization. In terms of processing, ubiquitinated in the presence of TRIM2 and UBE2D1.

It localises to the cell projection. It is found in the axon. The protein localises to the cytoplasm. Its subcellular location is the cytoskeleton. In terms of biological role, neurofilaments usually contain three intermediate filament proteins: NEFL, NEFM, and NEFH which are involved in the maintenance of neuronal caliber. May additionally cooperate with the neuronal intermediate filament proteins PRPH and INA to form neuronal filamentous networks. This Bos taurus (Bovine) protein is Neurofilament light polypeptide (NEFL).